A 527-amino-acid chain; its full sequence is Eukaryotic translation initiation factor 2 subunit gamma (527 aa).

Residues 1–83 (MSDLQDQEPS…GLPEQPLNPD (83 aa)) are disordered. Threonine 60 carries the post-translational modification Phosphothreonine. The tr-type G domain occupies 98–307 (QATINIGTIG…IVKTIPVPPR (210 aa)). The segment at 107–114 (GHVAHGKS) is G1. 110-115 (AHGKST) contributes to the GTP binding site. Residues 135-139 (NITIK) form a G2 region. Residues 193-196 (DCPG) are G3. 249–252 (NKVD) serves as a coordination point for GTP. The tract at residues 249 to 252 (NKVD) is G4. A Phosphoserine modification is found at serine 258. Residue 284-286 (SAQ) coordinates GTP. The G5 stretch occupies residues 284 to 286 (SAQ). Residues 515-527 (ATIKKGTTLEPIA) are interacts with CDC123.

The protein belongs to the TRAFAC class translation factor GTPase superfamily. Classic translation factor GTPase family. EIF2G subfamily. Eukaryotic translation initiation factor 2 eIF2 is a heterotrimeric complex composed of an alpha, a beta and a gamma subunit. The factors eIF-1, eIF-1A, eIF-2, eIF-3, TIF5/eIF-5 and methionyl-tRNAi form a multifactor complex (MFC) that may bind to the 40S ribosome. Interacts (via C-terminus) with CDC123; the interaction is direct. Interacts with GCD1. Interacts with the eIF2B complex subunits GCD6 and GCD7. Interacts with methionyl-initiator methionine tRNA.

It is found in the cytoplasm. The protein resides in the cytosol. It carries out the reaction GTP + H2O = GDP + phosphate + H(+). Its function is as follows. As a subunit of eukaryotic initiation factor 2 eIF2, involved in the early steps of protein synthesis. In the presence of GTP, eIF-2 forms a ternary complex with initiator tRNA Met-tRNAi and then recruits the 40S ribosomal complex and initiation factors eIF-1, eIF-1A and eIF-3 to form the 43S pre-initiation complex (43S PIC), a step that determines the rate of protein translation. The 43S PIC binds to mRNA and scans downstream to the initiation codon, where it forms a 48S initiation complex by codon-anticodon base pairing. This leads to the displacement of eIF-1 to allow GTPase-activating protein (GAP) eIF-5-mediated hydrolysis of eIF2-bound GTP. Hydrolysis of GTP and release of Pi, which makes GTP hydrolysis irreversible, causes the release of the eIF-2-GDP binary complex from the 40S subunit, an event that is essential for the subsequent joining of the 60S ribosomal subunit to form an elongation-competent 80S ribosome. In order for eIF-2 to recycle and catalyze another round of initiation, the GDP bound to eIF-2 must be exchanged with GTP by way of a reaction catalyzed by GDP-GTP exchange factor (GEF) eIF-2B. The protein is Eukaryotic translation initiation factor 2 subunit gamma (GCD11) of Saccharomyces cerevisiae (strain ATCC 204508 / S288c) (Baker's yeast).